The sequence spans 181 residues: Oligoribonuclease (181 aa).

An Exonuclease domain is found at 8–171 (LIWIDLEMTG…DDIRESVAEL (164 aa)). Y129 is an active-site residue.

The protein belongs to the oligoribonuclease family.

It localises to the cytoplasm. Its function is as follows. 3'-to-5' exoribonuclease specific for small oligoribonucleotides. The sequence is that of Oligoribonuclease from Yersinia enterocolitica serotype O:8 / biotype 1B (strain NCTC 13174 / 8081).